The following is a 247-amino-acid chain: ATP synthase subunit a, chloroplastic (247 aa).

5 helical membrane-spanning segments follow: residues 38–58 (QVLI…SIAV), 95–115 (VPFI…GALL), 134–154 (INTT…AGLS), 199–219 (LVVV…VMFL), and 220–240 (GLFT…AYIG).

This sequence belongs to the ATPase A chain family. In terms of assembly, F-type ATPases have 2 components, CF(1) - the catalytic core - and CF(0) - the membrane proton channel. CF(1) has five subunits: alpha(3), beta(3), gamma(1), delta(1), epsilon(1). CF(0) has four main subunits: a, b, b' and c.

Its subcellular location is the plastid. It localises to the chloroplast thylakoid membrane. Functionally, key component of the proton channel; it plays a direct role in the translocation of protons across the membrane. This chain is ATP synthase subunit a, chloroplastic, found in Oenothera argillicola (Appalachian evening primrose).